A 95-amino-acid chain; its full sequence is Co-chaperonin GroES (95 aa).

The protein belongs to the GroES chaperonin family. Heptamer of 7 subunits arranged in a ring. Interacts with the chaperonin GroEL.

The protein localises to the cytoplasm. Functionally, together with the chaperonin GroEL, plays an essential role in assisting protein folding. The GroEL-GroES system forms a nano-cage that allows encapsulation of the non-native substrate proteins and provides a physical environment optimized to promote and accelerate protein folding. GroES binds to the apical surface of the GroEL ring, thereby capping the opening of the GroEL channel. This Staphylococcus saprophyticus subsp. saprophyticus (strain ATCC 15305 / DSM 20229 / NCIMB 8711 / NCTC 7292 / S-41) protein is Co-chaperonin GroES.